The following is a 92-amino-acid chain: C-C motif chemokine 22 (92 aa).

The N-terminal stretch at 1-24 is a signal peptide; it reads MATLRVPLLVALVLLAVAIQTSDA. Cystine bridges form between cysteine 36–cysteine 60 and cysteine 37–cysteine 76.

It belongs to the intercrine beta (chemokine CC) family. Expressed by activated splenic B-lymphocytes and dendritic cells. Low expression in lung, thymocytes, lymph node, and unstimulated splenic cells.

The protein resides in the secreted. In terms of biological role, chemotactic for activated T-lymphocytes. May play an important role in the collaboration of dendritic cells and B-lymphocytes with T-cells in immune responses. The chain is C-C motif chemokine 22 (Ccl22) from Mus musculus (Mouse).